The sequence spans 143 residues: Ribonuclease H (143 aa).

The region spanning 1–140 (MKVEIYTDGA…VDALANLGIE (140 aa)) is the RNase H type-1 domain. Mg(2+) contacts are provided by D8, E46, D68, and D132.

The protein belongs to the RNase H family. In terms of assembly, monomer. Requires Mg(2+) as cofactor.

The protein resides in the cytoplasm. The enzyme catalyses Endonucleolytic cleavage to 5'-phosphomonoester.. In terms of biological role, endonuclease that specifically degrades the RNA of RNA-DNA hybrids. This Legionella pneumophila (strain Paris) protein is Ribonuclease H.